A 259-amino-acid chain; its full sequence is Probable UMP-CMP kinase 2 (259 aa).

Position 63–68 (63–68 (GSGKGT)) interacts with ATP. An NMP region spans residues 83–112 (SAGDLLRREIAMHTENGAMILNLIKDGKIV). A ribonucleoside 5'-phosphate contacts are provided by residues Arg89, 110-112 (KIV), and 137-140 (GFPR). Asn144 contributes to the CMP binding site. Positions 175–183 (NRNQGRIDD) are LID. Arg176 provides a ligand contact to ATP. Residues Arg180 and Arg191 each coordinate a ribonucleoside 5'-phosphate. Gly219 contributes to the ATP binding site.

The protein belongs to the adenylate kinase family. UMP-CMP kinase subfamily. Monomer. Mg(2+) is required as a cofactor.

Its subcellular location is the cytoplasm. It is found in the nucleus. The enzyme catalyses CMP + ATP = CDP + ADP. It carries out the reaction dCMP + ATP = dCDP + ADP. It catalyses the reaction UMP + ATP = UDP + ADP. Functionally, catalyzes the phosphorylation of pyrimidine nucleoside monophosphates at the expense of ATP. Plays an important role in de novo pyrimidine nucleotide biosynthesis. Has preference for UMP and CMP as phosphate acceptors. In Arabidopsis thaliana (Mouse-ear cress), this protein is Probable UMP-CMP kinase 2 (UMK2).